A 223-amino-acid chain; its full sequence is Endonuclease NucS (223 aa).

The protein belongs to the NucS endonuclease family.

The protein localises to the cytoplasm. Its function is as follows. Cleaves both 3' and 5' ssDNA extremities of branched DNA structures. The polypeptide is Endonuclease NucS (Streptomyces avermitilis (strain ATCC 31267 / DSM 46492 / JCM 5070 / NBRC 14893 / NCIMB 12804 / NRRL 8165 / MA-4680)).